A 175-amino-acid polypeptide reads, in one-letter code: Apoptosis regulator Bcl-2 homolog (175 aa).

Residues 37-42 (KLYITG) are mediates interaction with human NOP53 and localization to host nucleolus. Residues 153 to 173 (MTALLGSIALLATILAAVAMS) form a helical membrane-spanning segment.

Belongs to the Bcl-2 family. As to quaternary structure, interacts with human NOP53; may sequester ORF16 in host nucleolus and reduce its antiapoptotic activity. Interacts with ORF55.

Its subcellular location is the host membrane. It is found in the host mitochondrion. The protein resides in the host nucleus. It localises to the host nucleolus. In terms of biological role, plays a role in the protection against apoptosis mediated by cytotoxic cells during the immune response to acute and persistent viral infection. Contributes therefore to latency establishment. Also plays a role in the inhibition of host starvation-induced autophagy which ultimately contributes to the viral chronic infection. Also participates in the viral genome replication within host nucleus. This chain is Apoptosis regulator Bcl-2 homolog (vBCL2), found in Homo sapiens (Human).